The primary structure comprises 194 residues: Mitochondrial import inner membrane translocase subunit Tim22 (194 aa).

Cystine bridges form between cysteine 69/cysteine 141 and cysteine 160/cysteine 179. 3 helical membrane-spanning segments follow: residues 74 to 94, 123 to 143, and 170 to 190; these read ALAC…TAGI, MSYA…ECLV, and AGLK…AAID.

The protein belongs to the Tim17/Tim22/Tim23 family. Component of the TIM22 complex, whose core is composed of TIMM22, associated with peripheral protein FXC1/TIMM10B and the 70 kDa heterohexamer. In most cases, the 70 kDa complex is composed of TIMM9 and TIMM10 (TIMM10A or TIMM10B). A small fraction of the 70 kDa complex is composed of TIMM8 (TIMM8A/DDP1 or TIMM8B/DDP2) and TIMM13. The TIM22 complex also contains AGK and TIMM29. Interacts directly with TIMM9, TIMM10A and FXC1/TIMM10B. Interacts (when oxidized) with TIMM29; interaction is direct. Post-translationally, disulfide bonds promote efficient assembly of the TIM22 complex.

The protein localises to the mitochondrion inner membrane. In terms of biological role, essential core component of the TIM22 complex, a complex that mediates the import and insertion of multi-pass transmembrane proteins into the mitochondrial inner membrane. In the TIM22 complex, it constitutes the voltage-activated and signal-gated channel. Forms a twin-pore translocase that uses the membrane potential as external driving force in 2 voltage-dependent steps. In Bos taurus (Bovine), this protein is Mitochondrial import inner membrane translocase subunit Tim22 (TIMM22).